A 129-amino-acid chain; its full sequence is MRGVTETDKLANGIFHLVCLADLEFDYINPYDSASRINSVVLPEFIVQGVLCVFYLLTGHWFMTLLCLPYLYYNFHLYSKRQHLVDVTEIFNLLNWEKKKRLFKLAYIVLNLFLTIFWMIYSALDDYED.

Transmembrane regions (helical) follow at residues 45-65 and 105-125; these read FIVQ…FMTL and LAYI…SALD.

This sequence belongs to the cornichon family.

The protein resides in the membrane. The polypeptide is Probable protein cornichon homolog 2 (Arabidopsis thaliana (Mouse-ear cress)).